The following is a 212-amino-acid chain: Imidazole glycerol phosphate synthase subunit HisH (212 aa).

A Glutamine amidotransferase type-1 domain is found at 2–212; it reads RVVVIDYNGG…ILGNFLRWTS (211 aa). The Nucleophile role is filled by Cys-85. Catalysis depends on residues His-192 and Glu-194.

Heterodimer of HisH and HisF.

It is found in the cytoplasm. The catalysed reaction is 5-[(5-phospho-1-deoxy-D-ribulos-1-ylimino)methylamino]-1-(5-phospho-beta-D-ribosyl)imidazole-4-carboxamide + L-glutamine = D-erythro-1-(imidazol-4-yl)glycerol 3-phosphate + 5-amino-1-(5-phospho-beta-D-ribosyl)imidazole-4-carboxamide + L-glutamate + H(+). It carries out the reaction L-glutamine + H2O = L-glutamate + NH4(+). Its pathway is amino-acid biosynthesis; L-histidine biosynthesis; L-histidine from 5-phospho-alpha-D-ribose 1-diphosphate: step 5/9. IGPS catalyzes the conversion of PRFAR and glutamine to IGP, AICAR and glutamate. The HisH subunit catalyzes the hydrolysis of glutamine to glutamate and ammonia as part of the synthesis of IGP and AICAR. The resulting ammonia molecule is channeled to the active site of HisF. The protein is Imidazole glycerol phosphate synthase subunit HisH of Gluconobacter oxydans (strain 621H) (Gluconobacter suboxydans).